Consider the following 39-residue polypeptide: Potassium channel toxin alpha-KTx 31.1 (39 aa).

Disulfide bonds link Cys-7–Cys-30, Cys-13–Cys-35, and Cys-17–Cys-37.

The protein belongs to the short scorpion toxin superfamily. Potassium channel inhibitor family. Alpha-KTx 31 subfamily. In terms of tissue distribution, expressed by the venom gland.

Its subcellular location is the secreted. Functionally, voltage-gated potassium channel inhibitor. 1 uM of the native toxin inhibits rat Kv1.2/KCNA2 (100% inhibition), and drosophila Shaker IR/Sh (100%), human Kv1.3/KCNA3 (83%), rat Kv1.1/KCNA1 (32%) and rat Kv1.6/KCNA6 (21%). The sequence is that of Potassium channel toxin alpha-KTx 31.1 from Buthus occitanus tunetanus (Common European scorpion).